Reading from the N-terminus, the 424-residue chain is E3 ubiquitin-protein ligase RNF26 (424 aa).

A run of 5 helical transmembrane segments spans residues leucine 24 to tyrosine 44, glycine 60 to leucine 80, isoleucine 157 to leucine 177, valine 183 to tryptophan 203, and valine 224 to valine 244. An RING-type zinc finger spans residues cysteine 371–arginine 413.

As to quaternary structure, interacts with INCA1. Interacts with TMEM43, ENDOD1, TMEM33 and TMED1 to form a complex capable of modulating innate immune signaling through the cGAS-STING pathway. Interacts with UBE2J1; this interaction is important for SQSTM1 ubiquitination.

The protein resides in the endoplasmic reticulum membrane. It catalyses the reaction S-ubiquitinyl-[E2 ubiquitin-conjugating enzyme]-L-cysteine + [acceptor protein]-L-lysine = [E2 ubiquitin-conjugating enzyme]-L-cysteine + N(6)-ubiquitinyl-[acceptor protein]-L-lysine.. It functions in the pathway protein modification; protein ubiquitination. Its function is as follows. E3 ubiquitin-protein ligase that plays a key role in endosome organization by retaining vesicles in the perinuclear cloud. Acts as a platform for perinuclear positioning of the endosomal system by mediating ubiquitination of SQSTM1 through interaction with the ubiquitin conjugating enzyme UBE2J1. Ubiquitinated SQSTM1 attracts specific vesicle-associated adapters, forming a molecular bridge that restrains cognate vesicles in the perinuclear region and organizes the endosomal pathway for efficient cargo transport. Also acts as a regulator of type I interferon production in response to viral infection by mediating the formation of 'Lys-11'-linked polyubiquitin chains on TMEM173/STING, leading to stabilize TMEM173/STING. Also required to limit type I interferon response by promoting autophagic degradation of IRF3. The protein is E3 ubiquitin-protein ligase RNF26 of Mus musculus (Mouse).